Here is a 344-residue protein sequence, read N- to C-terminus: Meiotic recombination protein DMC1 homolog B (344 aa).

133 to 140 (GEFRSGKT) provides a ligand contact to ATP. Arg235 contacts dsDNA. Positions 235, 238, 241, 247, and 315 each coordinate ssDNA. 2 residues coordinate dsDNA: Arg241 and Arg247.

This sequence belongs to the RecA family. DMC1 subfamily. Highly expressed in spikelets. Expressed in meiotic young panicles.

It localises to the nucleus. Its function is as follows. Recombinase that may participate in meiotic recombination, specifically in homologous strand assimilation, which is required for the resolution of meiotic double-strand breaks. Exhibits DNA-dependent ATPase activity when bound to single-stranded DNA (ssDNA). Mediates renaturation of homologous complementary strands as well as assimilation of single strands into homologous supercoiled duplexes leading to D-loop formation. Binds circular single-stranded DNA (ssDNA) and circular double-stranded DNA (dsDNA) in vitro. Catalyzes DNA homologous renaturation and DNA strand exchange. The rates of these activities are dependent on the state of ATP hydrolysis. Forms helical filaments along ssDNA and dsDNA, and promotes strand exchange between ssDNA and dsDNA with long DNA substrates of several thousand base pairs. The presence of the replication protein A is not required for this activity. Seems to be required for homologous pairing and subsequent chromosome segregation during male meiosis. May be not directly required for homologous pairing during male meiosis. Required for synaptonemal complex assembly and crossover formation. Functions redundantly with DMC1A. In Oryza sativa subsp. japonica (Rice), this protein is Meiotic recombination protein DMC1 homolog B.